Here is a 216-residue protein sequence, read N- to C-terminus: uncharacterized protein (216 aa).

The Cupin type-2 domain maps to 125-176; the sequence is YPKSTNFDSHYHDCDEYWVIIEGAGTVVVGSRSFEVEVGDCVAIGMGHHHDL.

This is an uncharacterized protein from Sinorhizobium fredii (strain NBRC 101917 / NGR234).